A 134-amino-acid chain; its full sequence is Proline-rich nuclear receptor coactivator 2 (134 aa).

The interval 1 to 74 (MGGGERYNIP…NNSNWNASLS (74 aa)) is disordered. Composition is skewed to polar residues over residues 11–24 (DPQS…QQQH) and 52–61 (SAVQNGGKTK). A compositionally biased stretch (low complexity) spans 62–74 (SLSNNSNWNASLS). An SH3-binding motif is present at residues 94–100 (SEPPSPS).

Belongs to the PNRC family. PNRC2 subfamily. As to quaternary structure, interacts with UPF1/RENT1; preferentially interacts with hyperphosphorylated form. Interacts with DCP1A. Interacts with many nuclear receptors including ESR1, ESRRA, ESRRG, NR3C1/GR, NR5A1, PGR, TR, RAR and RXR.

It localises to the nucleus. The protein localises to the cytoplasm. Its subcellular location is the P-body. Involved in nonsense-mediated mRNA decay (NMD) by acting as a bridge between the mRNA decapping complex and the NMD machinery. May act by targeting the NMD machinery to the P-body and recruiting the decapping machinery to aberrant mRNAs. Required for UPF1/RENT1 localization to the P-body. Plays a role in glucocorticoid receptor-mediated mRNA degradation by interacting with the glucocorticoid receptor NR3C1 in a ligand-dependent manner when it is bound to the 5' UTR of target mRNAs and recruiting the RNA helicase UPF1 and the mRNA-decapping enzyme DCP1A, leading to RNA decay. Also acts as a nuclear receptor coactivator. May play a role in controlling the energy balance between energy storage and energy expenditure. The protein is Proline-rich nuclear receptor coactivator 2 (Pnrc2) of Rattus norvegicus (Rat).